Consider the following 651-residue polypeptide: NADH oxidase (651 aa).

Q104 lines the FMN pocket. Catalysis depends on Y175, which acts as the Proton donor. FMN is bound by residues R223 and 320-321; that span reads GR. [4Fe-4S] cluster contacts are provided by C344, C347, C351, and C364. FAD-binding residues include A396, E415, Q423, K433, and A460.

It in the N-terminal section; belongs to the NADH:flavin oxidoreductase/NADH oxidase family. In terms of assembly, homohexamer. Requires FMN as cofactor. The cofactor is FAD. It depends on [4Fe-4S] cluster as a cofactor. Post-translationally, the N-terminus is blocked.

The enzyme catalyses A + NADH + H(+) = AH2 + NAD(+). Reduces a range of alternative electron acceptors. This Thermoanaerobacter brockii (Thermoanaerobium brockii) protein is NADH oxidase.